A 571-amino-acid polypeptide reads, in one-letter code: MDRAVGRVALENEEREAKNTWRFVFRIAIFLLIVITLAISAAALVYSMEASTPGDLVGIPTVISRAEEKITSALSSNQDVVDRIYKQVALESPLALLNTESVIMNAITSLSYQINGAANNSGCGAPVHDPDYIGGIGKELIVDDASDVTSFYPSAFQEHLNFIPAPTTGSGCTRIPSFDISATHYCYTHNVILSGCRDHSHSHQYLALGVLRTSATGRVFFSTLRSINLDDNQNRKSCSVSATPLGCDMLCSKITETEEEDYSSVTPTSMVHGRLGFDGQYHEKDLDVITLFKDWVANYPGVGGGSFIDNRVWFPVYGGLKPNSPSDTAQEGRYVIYKRYNDTCPDEQDYQIRMAKSSYKPGRFGGKRVQQAILSIKVSTSLGEDPVLTVPPNTVTLMGPEGRVLTVGTSHFLYQRGSSYFSPALLYPMTVNNKTATLHSPYTFNAFTRPGSVPCQASARCPNSCVTGVYTDPYPLVFHRNHTLRGVFGTMLDDKQARLNPVSAVFDNISRSRITRVSSSSTKAAYTTSTCFKVVKTNKTYCLSIAEISNTLFGEFRIVPLLVEILKEDGV.

Over 1 to 26 (MDRAVGRVALENEEREAKNTWRFVFR) the chain is Intravirion. The helical transmembrane segment at 27–47 (IAIFLLIVITLAISAAALVYS) threads the bilayer. Topologically, residues 48–571 (MEASTPGDLV…LVEILKEDGV (524 aa)) are virion surface. An N-linked (GlcNAc...) asparagine; by host glycan is attached at Asn-119. The tract at residues 124 to 152 (GAPVHDPDYIGGIGKELIVDDASDVTSFY) is important for interaction with fusion/F protein. 3 cysteine pairs are disulfide-bonded: Cys-172–Cys-196, Cys-186–Cys-247, and Cys-238–Cys-251. Residues 234-239 (NRKSCS) form an involved in neuraminidase activity region. Residues Asn-341 and Asn-433 are each glycosylated (N-linked (GlcNAc...) asparagine; by host). Intrachain disulfides connect Cys-344-Cys-461 and Cys-455-Cys-465. Asn-481, Asn-508, and Asn-538 each carry an N-linked (GlcNAc...) asparagine; by host glycan. Residues Cys-531 and Cys-542 are joined by a disulfide bond.

It belongs to the paramyxoviruses hemagglutinin-neuraminidase family. In terms of assembly, homotetramer; composed of disulfide-linked homodimers. Interacts with F protein trimer. Interacts with host CG-1B; this interaction inhibits viral adsorption and replication rather than internalization.

Its subcellular location is the virion membrane. It localises to the host cell membrane. It carries out the reaction Hydrolysis of alpha-(2-&gt;3)-, alpha-(2-&gt;6)-, alpha-(2-&gt;8)- glycosidic linkages of terminal sialic acid residues in oligosaccharides, glycoproteins, glycolipids, colominic acid and synthetic substrates.. Mediates the viral entry into the host cell together with fusion/F protein. Attaches the virus to sialic acid-containing cell receptors and thereby initiates infection. Binding of HN protein to the receptor induces a conformational change that allows the F protein to trigger virion/cell membranes fusion. Functionally, neuraminidase activity ensures the efficient spread of the virus by dissociating the mature virions from the neuraminic acid containing glycoproteins. The chain is Hemagglutinin-neuraminidase (HN) from Gallus gallus (Chicken).